The chain runs to 450 residues: Tubulin alpha chain (450 aa).

Position 11 (glutamine 11) interacts with GTP. The residue at position 40 (lysine 40) is an N6-acetyllysine. Residues glutamate 71, serine 140, glycine 144, threonine 145, threonine 179, asparagine 206, and asparagine 228 each coordinate GTP. Glutamate 71 lines the Mg(2+) pocket. Glutamate 254 is an active-site residue.

Belongs to the tubulin family. In terms of assembly, dimer of alpha and beta chains. A typical microtubule is a hollow water-filled tube with an outer diameter of 25 nm and an inner diameter of 15 nM. Alpha-beta heterodimers associate head-to-tail to form protofilaments running lengthwise along the microtubule wall with the beta-tubulin subunit facing the microtubule plus end conferring a structural polarity. Microtubules usually have 13 protofilaments but different protofilament numbers can be found in some organisms and specialized cells. Requires Mg(2+) as cofactor. Acetylation of alpha chains at Lys-40 stabilizes microtubules and affects affinity and processivity of microtubule motors. This modification has a role in multiple cellular functions, ranging from cell motility, cell cycle progression or cell differentiation to intracellular trafficking and signaling.

Its subcellular location is the cytoplasm. The protein localises to the cytoskeleton. The catalysed reaction is GTP + H2O = GDP + phosphate + H(+). In terms of biological role, tubulin is the major constituent of microtubules, a cylinder consisting of laterally associated linear protofilaments composed of alpha- and beta-tubulin heterodimers. Microtubules grow by the addition of GTP-tubulin dimers to the microtubule end, where a stabilizing cap forms. Below the cap, tubulin dimers are in GDP-bound state, owing to GTPase activity of alpha-tubulin. The chain is Tubulin alpha chain from Euplotes vannus (Marine ciliate).